The following is a 97-amino-acid chain: Plastocyanin A/B (97 aa).

The Plastocyanin-like domain maps to 1 to 97 (AEVKLGSDDG…AGMKGEVTVN (97 aa)). Positions 37, 82, 85, and 90 each coordinate Cu cation.

Belongs to the plastocyanin family. The cofactor is Cu(2+).

It localises to the plastid. It is found in the chloroplast thylakoid membrane. Functionally, participates in electron transfer between P700 and the cytochrome b6-f complex in photosystem I. The protein is Plastocyanin A/B (PETE) of Petroselinum crispum (Parsley).